The chain runs to 240 residues: Uridylate kinase (240 aa).

ATP is bound at residue Lys13–Gly16. Residues Gly21–Gly26 form an involved in allosteric activation by GTP region. Gly55 provides a ligand contact to UMP. Residues Gly56 and Arg60 each contribute to the ATP site. Residues Asp75 and Thr136–Thr143 each bind UMP. ATP is bound by residues Thr163, Gln164, Tyr169, and Asp172.

It belongs to the UMP kinase family. In terms of assembly, homohexamer.

The protein localises to the cytoplasm. The catalysed reaction is UMP + ATP = UDP + ADP. It participates in pyrimidine metabolism; CTP biosynthesis via de novo pathway; UDP from UMP (UMPK route): step 1/1. With respect to regulation, allosterically activated by GTP. Inhibited by UTP. In terms of biological role, catalyzes the reversible phosphorylation of UMP to UDP. This Brucella abortus biovar 1 (strain 9-941) protein is Uridylate kinase.